The following is a 352-amino-acid chain: Protein NDRG4 (352 aa).

Phosphoserine is present on residues serine 298, serine 317, and serine 323. Low complexity predominate over residues 314 to 323 (RTASLTSASS). The disordered stretch occupies residues 314-352 (RTASLTSASSVDGSRPQACTHSESSEGLGQVNHTMEVSC). The span at 330 to 352 (QACTHSESSEGLGQVNHTMEVSC) shows a compositional bias: polar residues.

This sequence belongs to the NDRG family. Post-translationally, phosphorylated in an aortic smooth muscle cell line, following PDGF treatment. Expressed predominantly in brain and heart (at protein level). In the brain, detected in astrocytes. Isoform 1 and isoform 2 are only expressed in brain. Isoform 3 is expressed in both heart and brain. Up-regulated in glioblastoma multiforme cells.

It is found in the cytoplasm. The protein localises to the cytosol. Its function is as follows. Contributes to the maintenance of intracerebral BDNF levels within the normal range, which is necessary for the preservation of spatial learning and the resistance to neuronal cell death caused by ischemic stress. May enhance growth factor-induced ERK1 and ERK2 phosphorylation, including that induced by PDGF and FGF. May attenuate NGF-promoted ELK1 phosphorylation in a microtubule-dependent manner. This chain is Protein NDRG4 (NDRG4), found in Homo sapiens (Human).